The primary structure comprises 489 residues: GDP-fucose protein O-fucosyltransferase 4 (489 aa).

Residues 1-7 (MAARCTE) lie on the Cytoplasmic side of the membrane. The chain crosses the membrane as a helical; Signal-anchor for type II membrane protein span at residues 8-24 (AVLAALGVLSVCSASSS). At 25–489 (GSEASGEAER…EIFMKRNKNL (465 aa)) the chain is on the lumenal side. Residue Asn162 is glycosylated (N-linked (GlcNAc...) asparagine). An intrachain disulfide couples Cys385 to Cys388.

The protein belongs to the glycosyltransferase 10 family. Widely expressed. Expressed at slightly higher level in heart, kidney and lung.

It localises to the endoplasmic reticulum membrane. It catalyses the reaction L-threonyl-[protein] + GDP-beta-L-fucose = 3-O-(alpha-L-fucosyl)-L-threonyl-[protein] + GDP + H(+). The enzyme catalyses L-seryl-[protein] + GDP-beta-L-fucose = 3-O-(alpha-L-fucosyl)-L-seryl-[protein] + GDP + H(+). It functions in the pathway protein modification; protein glycosylation. Functionally, protein O-fucosyltransferase that specifically catalyzes O-fucosylation of serine or threonine residues in EMI domains of target proteins, such as MMRN1, MMRN2 and EMID1. Attaches fucose through an O-glycosidic linkage. O-fucosylation of EMI domain-containing proteins may be required for facilitating protein folding and secretion. Also shows minor alpha-(1,3)-fucosyltransferase activity toward activity toward biantennary N-glycan acceptors. However, this was tested with a library of synthetic substrates and this activity is unsure in vivo. The chain is GDP-fucose protein O-fucosyltransferase 4 (Fut11) from Mus musculus (Mouse).